Reading from the N-terminus, the 460-residue chain is Elongation factor 1-alpha (460 aa).

G2 carries the post-translational modification N,N,N-trimethylglycine. K3 bears the N6,N6-dimethyllysine; alternate mark. Position 3 is an N6-methyllysine; alternate (K3). The 236-residue stretch at 6 to 241 (KTHINVVVIG…DSIEPPKRPT (236 aa)) folds into the tr-type G domain. Residues 15–22 (GHVDSGKS) form a G1 region. A GTP-binding site is contributed by 15–22 (GHVDSGKS). The segment at 71–75 (GITID) is G2. K80 bears the N6,N6,N6-trimethyllysine mark. Residues 92–95 (DAPG) form a G3 region. GTP-binding positions include 92 to 96 (DAPGH) and 154 to 157 (NKMD). The segment at 154-157 (NKMD) is G4. Residues 193–195 (SGF) are G5. At K317 the chain carries N6,N6-dimethyllysine; alternate. K317 is modified (N6-methyllysine; alternate). Residue K391 is modified to N6-methyllysine.

The protein belongs to the TRAFAC class translation factor GTPase superfamily. Classic translation factor GTPase family. EF-Tu/EF-1A subfamily.

It localises to the cytoplasm. This protein promotes the GTP-dependent binding of aminoacyl-tRNA to the A-site of ribosomes during protein biosynthesis. This chain is Elongation factor 1-alpha (tef1), found in Hypocrea jecorina (Trichoderma reesei).